A 469-amino-acid polypeptide reads, in one-letter code: Putative pyridoxal-dependent decarboxylase domain-containing protein 2 (469 aa).

Residues 12 to 40 are a coiled coil; that stretch reads TLAEMGKNLKEAVKMLEDSQRRTEEENGK. Basic and acidic residues predominate over residues 28–44; sequence EDSQRRTEEENGKKLIS. Positions 28-47 are disordered; the sequence is EDSQRRTEEENGKKLISRDI.

This sequence belongs to the group II decarboxylase family. Pyridoxal 5'-phosphate is required as a cofactor.

The polypeptide is Putative pyridoxal-dependent decarboxylase domain-containing protein 2 (PDXDC2P) (Homo sapiens (Human)).